Here is a 68-residue protein sequence, read N- to C-terminus: Large ribosomal subunit protein uL30 (68 aa).

It belongs to the universal ribosomal protein uL30 family. Part of the 50S ribosomal subunit.

This chain is Large ribosomal subunit protein uL30, found in Pseudarthrobacter chlorophenolicus (strain ATCC 700700 / DSM 12829 / CIP 107037 / JCM 12360 / KCTC 9906 / NCIMB 13794 / A6) (Arthrobacter chlorophenolicus).